A 38-amino-acid chain; its full sequence is Putative defensin-like protein 105 (38 aa).

3 cysteine pairs are disulfide-bonded: Cys5-Cys27, Cys13-Cys33, and Cys17-Cys34.

Belongs to the DEFL family.

This is Putative defensin-like protein 105 from Arabidopsis thaliana (Mouse-ear cress).